Consider the following 171-residue polypeptide: Crossover junction endodeoxyribonuclease RuvC (171 aa).

Active-site residues include aspartate 7, glutamate 66, and aspartate 138. Mg(2+) contacts are provided by aspartate 7, glutamate 66, and aspartate 138.

Belongs to the RuvC family. Homodimer which binds Holliday junction (HJ) DNA. The HJ becomes 2-fold symmetrical on binding to RuvC with unstacked arms; it has a different conformation from HJ DNA in complex with RuvA. In the full resolvosome a probable DNA-RuvA(4)-RuvB(12)-RuvC(2) complex forms which resolves the HJ. Mg(2+) serves as cofactor.

Its subcellular location is the cytoplasm. It catalyses the reaction Endonucleolytic cleavage at a junction such as a reciprocal single-stranded crossover between two homologous DNA duplexes (Holliday junction).. In terms of biological role, the RuvA-RuvB-RuvC complex processes Holliday junction (HJ) DNA during genetic recombination and DNA repair. Endonuclease that resolves HJ intermediates. Cleaves cruciform DNA by making single-stranded nicks across the HJ at symmetrical positions within the homologous arms, yielding a 5'-phosphate and a 3'-hydroxyl group; requires a central core of homology in the junction. The consensus cleavage sequence is 5'-(A/T)TT(C/G)-3'. Cleavage occurs on the 3'-side of the TT dinucleotide at the point of strand exchange. HJ branch migration catalyzed by RuvA-RuvB allows RuvC to scan DNA until it finds its consensus sequence, where it cleaves and resolves the cruciform DNA. The sequence is that of Crossover junction endodeoxyribonuclease RuvC from Thiobacillus denitrificans (strain ATCC 25259 / T1).